A 334-amino-acid chain; its full sequence is Protein-methionine-sulfoxide reductase catalytic subunit MsrP (334 aa).

Residues 1 to 44 constitute a signal peptide (tat-type signal); that stretch reads MKKNQFLKESDVTAESVFFMTRRQVLKALGISAAALSLPHAAHA. Residues Asn88, 91–92, Cys146, Thr181, Asn233, Arg238, and 249–251 contribute to the Mo-molybdopterin site; these read YE and GIK.

It belongs to the MsrP family. In terms of assembly, heterodimer of a catalytic subunit (MsrP) and a heme-binding subunit (MsrQ). The cofactor is Mo-molybdopterin. In terms of processing, predicted to be exported by the Tat system. The position of the signal peptide cleavage has not been experimentally proven.

It localises to the periplasm. The catalysed reaction is L-methionyl-[protein] + a quinone + H2O = L-methionyl-(S)-S-oxide-[protein] + a quinol. It carries out the reaction L-methionyl-[protein] + a quinone + H2O = L-methionyl-(R)-S-oxide-[protein] + a quinol. Part of the MsrPQ system that repairs oxidized periplasmic proteins containing methionine sulfoxide residues (Met-O), using respiratory chain electrons. Thus protects these proteins from oxidative-stress damage caused by reactive species of oxygen and chlorine generated by the host defense mechanisms. MsrPQ is essential for the maintenance of envelope integrity under bleach stress, rescuing a wide series of structurally unrelated periplasmic proteins from methionine oxidation, including the primary periplasmic chaperone SurA and the lipoprotein Pal. The catalytic subunit MsrP is non-stereospecific, being able to reduce both (R-) and (S-) diastereoisomers of methionine sulfoxide. This chain is Protein-methionine-sulfoxide reductase catalytic subunit MsrP, found in Escherichia coli (strain 55989 / EAEC).